Consider the following 404-residue polypeptide: Phosphopentomutase (404 aa).

Mn(2+) contacts are provided by D10, D303, H308, D344, H345, and H356.

It belongs to the phosphopentomutase family. The cofactor is Mn(2+).

It is found in the cytoplasm. The enzyme catalyses 2-deoxy-alpha-D-ribose 1-phosphate = 2-deoxy-D-ribose 5-phosphate. The catalysed reaction is alpha-D-ribose 1-phosphate = D-ribose 5-phosphate. The protein operates within carbohydrate degradation; 2-deoxy-D-ribose 1-phosphate degradation; D-glyceraldehyde 3-phosphate and acetaldehyde from 2-deoxy-alpha-D-ribose 1-phosphate: step 1/2. In terms of biological role, isomerase that catalyzes the conversion of deoxy-ribose 1-phosphate (dRib-1-P) and ribose 1-phosphate (Rib-1-P) to deoxy-ribose 5-phosphate (dRib-5-P) and ribose 5-phosphate (Rib-5-P), respectively. The polypeptide is Phosphopentomutase (Shewanella oneidensis (strain ATCC 700550 / JCM 31522 / CIP 106686 / LMG 19005 / NCIMB 14063 / MR-1)).